A 348-amino-acid polypeptide reads, in one-letter code: Centromere protein N-B (348 aa).

The protein belongs to the CENP-N/CHL4 family.

It localises to the nucleus. The protein localises to the chromosome. The protein resides in the centromere. In terms of biological role, probable component of a centromeric complex involved in assembly of kinetochore proteins, mitotic progression and chromosome segregation. The polypeptide is Centromere protein N-B (cenpn-b) (Xenopus laevis (African clawed frog)).